Reading from the N-terminus, the 165-residue chain is MIINEIEGSLREFDITNRVVDYLEIEWFESTKRIQRKKSKNGQEVAIKFLKEGQRLKHEDVIYADDQKIIVVDIIPCDAIVVKPKSLLEMGNVCYEIGNKHLPMFIQNDEVLLPFEEPIFKWLSASGYHTEKVFTRLTNIVNSTVQPHGHSESSSLFFKIMNIAK.

This sequence belongs to the UreE family.

It localises to the cytoplasm. In terms of biological role, involved in urease metallocenter assembly. Binds nickel. Probably functions as a nickel donor during metallocenter assembly. The chain is Urease accessory protein UreE from Flavobacterium johnsoniae (strain ATCC 17061 / DSM 2064 / JCM 8514 / BCRC 14874 / CCUG 350202 / NBRC 14942 / NCIMB 11054 / UW101) (Cytophaga johnsonae).